Consider the following 209-residue polypeptide: Guanylate kinase (209 aa).

A Guanylate kinase-like domain is found at 9-188 (GIMLVISSPS…SVHQIKCIFT (180 aa)). 16–23 (SPSGGGKT) serves as a coordination point for ATP.

This sequence belongs to the guanylate kinase family.

It localises to the cytoplasm. The enzyme catalyses GMP + ATP = GDP + ADP. Functionally, essential for recycling GMP and indirectly, cGMP. The polypeptide is Guanylate kinase (Ehrlichia canis (strain Jake)).